Reading from the N-terminus, the 223-residue chain is Urease accessory protein UreF (223 aa).

Belongs to the UreF family. In terms of assembly, ureD, UreF and UreG form a complex that acts as a GTP-hydrolysis-dependent molecular chaperone, activating the urease apoprotein by helping to assemble the nickel containing metallocenter of UreC. The UreE protein probably delivers the nickel.

It localises to the cytoplasm. Functionally, required for maturation of urease via the functional incorporation of the urease nickel metallocenter. The sequence is that of Urease accessory protein UreF from Rhizobium etli (strain CIAT 652).